We begin with the raw amino-acid sequence, 103 residues long: uncharacterized protein (103 aa).

Residues 1 to 103 form a disordered region; that stretch reads MAGARRRARC…WRGGSCTSQR (103 aa). A compositionally biased stretch (low complexity) spans 35–44; it reads GSGQPRWWPW. Composition is skewed to basic residues over residues 55-65 and 74-84; these read RRPGPGRRARS and RPPHSRTRARR.

Belongs to the epstein-barr virus RPMS1 family.

This is an uncharacterized protein from Homo sapiens (Human).